The following is a 969-amino-acid chain: Dual serine/threonine and tyrosine protein kinase (969 aa).

Residues 7–37 (QEFRRYLRNRNQLQHVLEETQQALELINLEN) adopt a coiled-coil conformation. A Protein kinase domain is found at 632 to 894 (PHCAEEIGRG…PLLGAIVPVL (263 aa)). ATP-binding positions include 638-646 (IGRGQYGIV) and lysine 662. Residue aspartate 760 is the Proton acceptor of the active site. The interval 904-945 (SKSLQEVSSDKLQESSTDSRNPALALAEPYNQRGTVVSPPPT) is disordered.

This sequence belongs to the protein kinase superfamily. Ser/Thr protein kinase family.

The protein localises to the cytoplasm. The catalysed reaction is L-seryl-[protein] + ATP = O-phospho-L-seryl-[protein] + ADP + H(+). It carries out the reaction L-threonyl-[protein] + ATP = O-phospho-L-threonyl-[protein] + ADP + H(+). The enzyme catalyses L-tyrosyl-[protein] + ATP = O-phospho-L-tyrosyl-[protein] + ADP + H(+). The protein is Dual serine/threonine and tyrosine protein kinase of Apis mellifera (Honeybee).